Consider the following 361-residue polypeptide: Innexin inx1 (361 aa).

Residues 1–28 (MYKLLGGLKEYLKWQDIVTDNAIFRLHN) lie on the Cytoplasmic side of the membrane. Residues 29 to 49 (LFTTVLLLTCSLIITATQYVG) form a helical membrane-spanning segment. Over 50–109 (NPIHCIVNGLPVRPINTYCWITSTFTMPDAFLRQVGSEVAHPGVANDFGDEDAKKYYTYY) the chain is Extracellular. The chain crosses the membrane as a helical span at residues 110 to 130 (QWVCFVLFFQAMLCYTPKWIW). Residues 131-181 (DSIEGGLLRTLIMGLNRGLCQDDEKCMKKKALIEYLLRHIKRHNMYALKYW) lie on the Cytoplasmic side of the membrane. The helical transmembrane segment at 182–202 (FCETLCLVNIIGQLYLMNHFF) threads the bilayer. The Extracellular segment spans residues 203-267 (DGEFFSYGLR…LPLNIVNEKT (65 aa)). Residues 268 to 288 (YIFLWFWYIILAALLSVLVVY) traverse the membrane as a helical segment. At 289-361 (RAVILAVPSV…KIETPSSNNP (73 aa)) the chain is on the cytoplasmic side.

The protein belongs to the pannexin family. In terms of tissue distribution, expressed in embryonic neural precursors including the dorsal median neuroblast, glial cells, neuropilar glial ring, developing myoblasts cells and in a circumferential band of epithelial cells at the trochanter/coxa boundary stripe in the developing limb.

It localises to the cell membrane. The protein resides in the cell junction. It is found in the gap junction. In terms of biological role, structural components of the gap junctions. The chain is Innexin inx1 (inx1) from Schistocerca americana (American grasshopper).